A 189-amino-acid polypeptide reads, in one-letter code: uncharacterized protein (189 aa).

Belongs to the isochorismatase family.

This is an uncharacterized protein from Bacillus subtilis (strain 168).